A 1117-amino-acid chain; its full sequence is Rhoptry apical surface protein 3 (1117 aa).

Residues 1–12 (MENRPRQQTSGH) show a composition bias toward polar residues. Disordered regions lie at residues 1-27 (MENRPRQQTSGHDCSLGTGDDLSSRPG), 47-243 (NHER…SHFT), 258-301 (DSER…NKGI), 325-398 (SDFK…SLST), 415-442 (WNHASPGEGEATEAAGASVSGSSSFLAA), 490-572 (AEAV…ESEL), 600-619 (RPLLSGPPEEEAGNAEELRS), and 654-736 (QDGT…RLQG). Basic and acidic residues-rich tracts occupy residues 83–100 (DSNHTVEHEVIKEEDSQK), 197–209 (TPLRRVGEERHVS), and 275–300 (MKPKELDKEAERKQEQLRSSKGDNKG). Low complexity-rich tracts occupy residues 418–442 (ASPGEGEATEAAGASVSGSSSFLAA) and 490–508 (AEAVAAVGQSSSDSSGDSS). The segment covering 510 to 520 (ESDHSGRERSR) has biased composition (basic and acidic residues). The span at 530 to 540 (NEITTMRSQRS) shows a compositional bias: polar residues. Residues 546-555 (FSREPERESD) are compositionally biased toward basic and acidic residues. A compositionally biased stretch (polar residues) spans 557–569 (GEMTPTGETSGSE). The segment covering 724–734 (DADRKQEEKRL) has biased composition (basic and acidic residues). Residues 752–788 (MLSVDRRLRKLHSDTAVRRMGETEFWKLYFYQVFLLM) form the BSD domain. A compositionally biased stretch (polar residues) spans 829-838 (QTSGFTESDT). Disordered stretches follow at residues 829–848 (QTSGFTESDTSSPSPSYGFA), 858–891 (IIPPTGLPDNTEEGEPLSFGGVSLEPKDEEAPEQ), 909–964 (RSPS…GDSP), 1031–1066 (SSSQVNGRVSTSRGTMGEDRHQDQQGDNRLEGPSHL), and 1095–1117 (GTCGDTHQPGLACKGKEVQGARA). Low complexity predominate over residues 839–848 (SSPSPSYGFA). Residues 909 to 931 (RSPSLSSSSSGTTSVSARGTGSS) are compositionally biased toward low complexity. Polar residues predominate over residues 1031 to 1044 (SSSQVNGRVSTSRG). 2 stretches are compositionally biased toward basic and acidic residues: residues 1046 to 1062 (MGEDRHQDQQGDNRLEG) and 1108 to 1117 (KGKEVQGARA).

In terms of assembly, interacts with RASP2.

The protein localises to the cytoplasmic vesicle. Its subcellular location is the secretory vesicle. The protein resides in the rhoptry membrane. This Toxoplasma gondii (strain ATCC 50853 / GT1) protein is Rhoptry apical surface protein 3.